Consider the following 231-residue polypeptide: MPVDIGKLVTPVDSAHPGSAILVEPADAVPFERSWADQRHWQQRLLEQPHLPEAVWLLQHKACYTLGRGASSEHLHFPLDQPPAPVHRIDRGGEVTHHLPGQLVAYPVLDLRRRQPDLHWYLRELEQVLIDVLAQLDLRGERLPGLTGLWLDNRKVAAIGVGCRRWITQHGLALNIDCELAGFDQVTPCGLSGRAVGRLVDWIPGLRLAEVQPLLRDALAARFHLAWCDEA.

Positions 49–227 (PHLPEAVWLL…ALAARFHLAW (179 aa)) constitute a BPL/LPL catalytic domain. Substrate contacts are provided by residues 91 to 98 (RGGEVTHH), 158 to 160 (AIG), and 171 to 173 (GLA). C189 functions as the Acyl-thioester intermediate in the catalytic mechanism.

Belongs to the LipB family.

The protein resides in the cytoplasm. It catalyses the reaction octanoyl-[ACP] + L-lysyl-[protein] = N(6)-octanoyl-L-lysyl-[protein] + holo-[ACP] + H(+). It participates in protein modification; protein lipoylation via endogenous pathway; protein N(6)-(lipoyl)lysine from octanoyl-[acyl-carrier-protein]: step 1/2. Catalyzes the transfer of endogenously produced octanoic acid from octanoyl-acyl-carrier-protein onto the lipoyl domains of lipoate-dependent enzymes. Lipoyl-ACP can also act as a substrate although octanoyl-ACP is likely to be the physiological substrate. The sequence is that of Octanoyltransferase from Parasynechococcus marenigrum (strain WH8102).